Consider the following 271-residue polypeptide: Ribosomal RNA small subunit methyltransferase A (271 aa).

6 residues coordinate S-adenosyl-L-methionine: His-11, Leu-13, Gly-38, Glu-58, Asp-86, and Asn-101.

It belongs to the class I-like SAM-binding methyltransferase superfamily. rRNA adenine N(6)-methyltransferase family. RsmA subfamily.

It is found in the cytoplasm. The enzyme catalyses adenosine(1518)/adenosine(1519) in 16S rRNA + 4 S-adenosyl-L-methionine = N(6)-dimethyladenosine(1518)/N(6)-dimethyladenosine(1519) in 16S rRNA + 4 S-adenosyl-L-homocysteine + 4 H(+). Its function is as follows. Specifically dimethylates two adjacent adenosines (A1518 and A1519) in the loop of a conserved hairpin near the 3'-end of 16S rRNA in the 30S particle. May play a critical role in biogenesis of 30S subunits. This is Ribosomal RNA small subunit methyltransferase A from Helicobacter pylori (strain J99 / ATCC 700824) (Campylobacter pylori J99).